The following is a 460-amino-acid chain: tRNA modification GTPase MnmE (460 aa).

(6S)-5-formyl-5,6,7,8-tetrahydrofolate contacts are provided by Arg-29, Glu-91, and Arg-131. In terms of domain architecture, TrmE-type G spans 226 to 383 (GLRVALVGRP…LVQAVLERCG (158 aa)). Residue Asn-236 participates in K(+) binding. GTP-binding positions include 236–241 (NVGKSS), 255–261 (TDLPGTT), and 280–283 (DTAG). Ser-240 is a Mg(2+) binding site. Residues Thr-255, Leu-257, and Thr-260 each coordinate K(+). Thr-261 serves as a coordination point for Mg(2+). Lys-460 contributes to the (6S)-5-formyl-5,6,7,8-tetrahydrofolate binding site.

Belongs to the TRAFAC class TrmE-Era-EngA-EngB-Septin-like GTPase superfamily. TrmE GTPase family. As to quaternary structure, homodimer. Heterotetramer of two MnmE and two MnmG subunits. The cofactor is K(+).

Its subcellular location is the cytoplasm. Its function is as follows. Exhibits a very high intrinsic GTPase hydrolysis rate. Involved in the addition of a carboxymethylaminomethyl (cmnm) group at the wobble position (U34) of certain tRNAs, forming tRNA-cmnm(5)s(2)U34. The protein is tRNA modification GTPase MnmE of Synechococcus sp. (strain WH7803).